We begin with the raw amino-acid sequence, 152 residues long: Transcriptional regulator MraZ (152 aa).

2 consecutive SpoVT-AbrB domains span residues 5-52 and 81-124; these read HSNR…PMPE and ATEV…DQGR.

The protein belongs to the MraZ family. As to quaternary structure, forms oligomers.

It is found in the cytoplasm. The protein localises to the nucleoid. The sequence is that of Transcriptional regulator MraZ from Solidesulfovibrio magneticus (strain ATCC 700980 / DSM 13731 / RS-1) (Desulfovibrio magneticus).